A 168-amino-acid polypeptide reads, in one-letter code: Transcriptional repressor NrdR (168 aa).

A zinc finger spans residues 3 to 34 (CPYCGFAQDRVVDSRESKEADSIRRRRECERC). One can recognise an ATP-cone domain in the interval 49–139 (YMVVKKDGRR…VYRDFKDVNE (91 aa)).

The protein belongs to the NrdR family. Zn(2+) is required as a cofactor.

Functionally, negatively regulates transcription of bacterial ribonucleotide reductase nrd genes and operons by binding to NrdR-boxes. This chain is Transcriptional repressor NrdR, found in Acidobacterium capsulatum (strain ATCC 51196 / DSM 11244 / BCRC 80197 / JCM 7670 / NBRC 15755 / NCIMB 13165 / 161).